We begin with the raw amino-acid sequence, 625 residues long: Probable receptor-like protein kinase At1g11050 (625 aa).

The signal sequence occupies residues 1-20 (MPNSILFLLLSFLYLTNCVA). Over 21–227 (QSPSQTCPLD…PLNSKKKRHT (207 aa)) the chain is Extracellular. Residues Asn-40, Asn-106, Asn-121, and Asn-177 are each glycosylated (N-linked (GlcNAc...) asparagine). Residues 228-248 (VALALGITGAIFGALVIAGLI) traverse the membrane as a helical segment. The Cytoplasmic portion of the chain corresponds to 249 to 625 (CLYFRFGKAV…LQIHSGDMLR (377 aa)). Residues 295-555 (FSQKNFIGRG…NPKGIMERFL (261 aa)) form the Protein kinase domain. Residues 301–309 (IGRGGFGFV) and Lys-323 each bind ATP. Asp-426 (proton acceptor) is an active-site residue.

The protein belongs to the protein kinase superfamily. Ser/Thr protein kinase family.

The protein localises to the membrane. The catalysed reaction is L-seryl-[protein] + ATP = O-phospho-L-seryl-[protein] + ADP + H(+). It catalyses the reaction L-threonyl-[protein] + ATP = O-phospho-L-threonyl-[protein] + ADP + H(+). This is Probable receptor-like protein kinase At1g11050 from Arabidopsis thaliana (Mouse-ear cress).